The primary structure comprises 444 residues: Protein giant-lens (444 aa).

A signal peptide spans 1-24; the sequence is MPTTLMLLPCMLLLLLTAAAVAVG. Two-fingered domain 1 part repeat units follow at residues 123–165 and 285–307; these read RDVR…CRCP and CPSS…YKMC. Intrachain disulfides connect C141-C162, C147-C285, C164-C307, C316-C341, C343-C370, C378-C405, C384-C413, and C407-C440. 2 Two-fingered domain repeats span residues 316–370 and 378–444; these read CTHF…LFAC and CQRK…MAND. The N-linked (GlcNAc...) asparagine glycan is linked to N333.

In terms of assembly, interacts with spi. In terms of tissue distribution, during embryogenesis, expression is in a segmental pattern in the ectoderm and in the nervous system. In the eye imaginal disks, expression in photoreceptor cells begins a few rows posterior to the morphogenetic furrow. Also expressed in the wing disk. In the adult, expression is seen in the retina and lamina.

The protein resides in the secreted. Its function is as follows. Regulates cell determination; development of ommatidia and optic lobe. Is a signaling molecule involved in the process of axon pathfinding in the eye. Part of the Ras pathway regulating programmed cell death in pupal eyes; activated by lozenge (lz). Antagonist for the Egfr receptor (gurken). Inhibits Egfr signaling without interacting directly with the receptor, but instead by sequestering the Egfr-activating ligand spitz (spi). The protein is Protein giant-lens (aos) of Drosophila melanogaster (Fruit fly).